A 308-amino-acid chain; its full sequence is 1D-myo-inositol 2-acetamido-2-deoxy-alpha-D-glucopyranoside deacetylase (308 aa).

Residues H18, D21, and H153 each contribute to the Zn(2+) site.

The protein belongs to the MshB deacetylase family. Requires Zn(2+) as cofactor.

The enzyme catalyses 1D-myo-inositol 2-acetamido-2-deoxy-alpha-D-glucopyranoside + H2O = 1D-myo-inositol 2-amino-2-deoxy-alpha-D-glucopyranoside + acetate. In terms of biological role, catalyzes the deacetylation of 1D-myo-inositol 2-acetamido-2-deoxy-alpha-D-glucopyranoside (GlcNAc-Ins) in the mycothiol biosynthesis pathway. The polypeptide is 1D-myo-inositol 2-acetamido-2-deoxy-alpha-D-glucopyranoside deacetylase (Salinispora arenicola (strain CNS-205)).